Here is a 207-residue protein sequence, read N- to C-terminus: Nitrophorin-1 (207 aa).

A signal peptide spans 1-23 (MKSYTALLAVAILCLFAAVGVSG). 2 disulfides stabilise this stretch: C25-C145 and C64-C194. H82 contributes to the heme binding site.

The protein belongs to the calycin superfamily. Nitrophorin family. Salivary gland (at protein level).

Its subcellular location is the secreted. Heme-based protein that deliver nitric oxide gas (NO) to the victim while feeding, resulting in vasodilation and inhibition of platelet aggregation. Reversibly binds nitric oxide (NO). Also binds tightly to histamine, which is released by the host to induce wound healing. The polypeptide is Nitrophorin-1 (Rhodnius prolixus (Triatomid bug)).